Consider the following 586-residue polypeptide: Arginine--tRNA ligase (586 aa).

The 'HIGH' region signature appears at 128-138 (ANPTGPLHVGH).

The protein belongs to the class-I aminoacyl-tRNA synthetase family. Monomer.

It is found in the cytoplasm. It carries out the reaction tRNA(Arg) + L-arginine + ATP = L-arginyl-tRNA(Arg) + AMP + diphosphate. In Legionella pneumophila (strain Corby), this protein is Arginine--tRNA ligase.